Consider the following 251-residue polypeptide: Aspartate/glutamate leucyltransferase (251 aa).

Belongs to the R-transferase family. Bpt subfamily.

It is found in the cytoplasm. It carries out the reaction N-terminal L-glutamyl-[protein] + L-leucyl-tRNA(Leu) = N-terminal L-leucyl-L-glutamyl-[protein] + tRNA(Leu) + H(+). The catalysed reaction is N-terminal L-aspartyl-[protein] + L-leucyl-tRNA(Leu) = N-terminal L-leucyl-L-aspartyl-[protein] + tRNA(Leu) + H(+). Functions in the N-end rule pathway of protein degradation where it conjugates Leu from its aminoacyl-tRNA to the N-termini of proteins containing an N-terminal aspartate or glutamate. This is Aspartate/glutamate leucyltransferase from Xanthomonas euvesicatoria pv. vesicatoria (strain 85-10) (Xanthomonas campestris pv. vesicatoria).